A 59-amino-acid chain; its full sequence is Putative potassium channel toxin Ts22 (59 aa).

Residues 1 to 22 (MKAFYGILIIFILISMIDLSQQ) form the signal peptide. Disulfide bonds link Cys29–Cys50, Cys35–Cys55, and Cys39–Cys57.

It belongs to the short scorpion toxin superfamily. Potassium channel inhibitor family. Alpha-KTx 04 subfamily. As to expression, expressed by the venom gland.

The protein resides in the secreted. Functionally, potently blocks voltage-gated potassium channels (Kv). The protein is Putative potassium channel toxin Ts22 of Tityus serrulatus (Brazilian scorpion).